The primary structure comprises 469 residues: 3-isopropylmalate dehydratase large subunit (469 aa).

3 residues coordinate [4Fe-4S] cluster: Cys-350, Cys-410, and Cys-413.

Belongs to the aconitase/IPM isomerase family. LeuC type 1 subfamily. As to quaternary structure, heterodimer of LeuC and LeuD. [4Fe-4S] cluster serves as cofactor.

It carries out the reaction (2R,3S)-3-isopropylmalate = (2S)-2-isopropylmalate. It participates in amino-acid biosynthesis; L-leucine biosynthesis; L-leucine from 3-methyl-2-oxobutanoate: step 2/4. Catalyzes the isomerization between 2-isopropylmalate and 3-isopropylmalate, via the formation of 2-isopropylmaleate. The protein is 3-isopropylmalate dehydratase large subunit of Rhizobium meliloti (strain 1021) (Ensifer meliloti).